A 139-amino-acid chain; its full sequence is Putative nickel-responsive regulator (139 aa).

The Ni(2+) site is built by H77, H88, H90, and C96.

This sequence belongs to the transcriptional regulatory CopG/NikR family. It depends on Ni(2+) as a cofactor.

Its function is as follows. Transcriptional regulator. This chain is Putative nickel-responsive regulator, found in Haloarcula marismortui (strain ATCC 43049 / DSM 3752 / JCM 8966 / VKM B-1809) (Halobacterium marismortui).